We begin with the raw amino-acid sequence, 156 residues long: MALVLAAAGAVTVVQFRDAAHEADPDGALRGLTDDITADLVRELVTILPIVLVIAAVAAYLLSRAALRPVDRIRAAAQTLTTTPHPDTDAPLPVPPTDDEIAWLATTLNTMLTRLQRALAHEQQFVADASHELRTPLALLTTELELRCAGPDPPTS.

The Extracellular segment spans residues 1-42 (MALVLAAAGAVTVVQFRDAAHEADPDGALRGLTDDITADLVR). Residues 43–63 (ELVTILPIVLVIAAVAAYLLS) traverse the membrane as a helical segment. The HAMP domain occupies 64–120 (RAALRPVDRIRAAAQTLTTTPHPDTDAPLPVPPTDDEIAWLATTLNTMLTRLQRALA). Residues 64 to 156 (RAALRPVDRI…RCAGPDPPTS (93 aa)) are Cytoplasmic-facing. The 29-residue stretch at 128 to 156 (DASHELRTPLALLTTELELRCAGPDPPTS) folds into the Histidine kinase; first part domain. Residue histidine 131 is modified to Phosphohistidine; by autocatalysis.

As to quaternary structure, homodimer. Each monomer interacts with HK1 and the receiver domain of TcrA. In terms of processing, phosphorylated by HK1.

It is found in the cell membrane. It carries out the reaction ATP + protein L-histidine = ADP + protein N-phospho-L-histidine.. Functionally, member of the three-protein two-component system HK1/HK2/TcrA. HK2 transfers its phosphoryl group to TcrA. In Mycobacterium tuberculosis (strain ATCC 25618 / H37Rv), this protein is Sensor histidine kinase component HK2.